The chain runs to 127 residues: Fluoride-specific ion channel FluC 1 (127 aa).

3 consecutive transmembrane segments (helical) span residues Pro6–Leu26, Phe29–Phe49, and Glu95–Gly115.

Belongs to the fluoride channel Fluc/FEX (TC 1.A.43) family.

The protein resides in the cell membrane. The catalysed reaction is fluoride(in) = fluoride(out). In terms of biological role, fluoride-specific ion channel. Important for reducing fluoride concentration in the cell, thus reducing its toxicity. The protein is Fluoride-specific ion channel FluC 1 of Haloarcula marismortui (strain ATCC 43049 / DSM 3752 / JCM 8966 / VKM B-1809) (Halobacterium marismortui).